Reading from the N-terminus, the 514-residue chain is UDP-N-acetylmuramyl-tripeptide synthetase (514 aa).

Leu-44 and Ser-46 together coordinate UDP-N-acetyl-alpha-D-muramoyl-L-alanyl-D-glutamate. ATP is bound at residue 129–135 (GTNGKTS). Residues 171–172 (TT), Ser-198, and Arg-206 contribute to the UDP-N-acetyl-alpha-D-muramoyl-L-alanyl-D-glutamate site. Residue Lys-238 is modified to N6-carboxylysine.

It belongs to the MurCDEF family. MurE subfamily. Post-translationally, carboxylation is probably crucial for Mg(2+) binding and, consequently, for the gamma-phosphate positioning of ATP.

The protein localises to the cytoplasm. It participates in cell wall biogenesis; peptidoglycan biosynthesis. Catalyzes the addition of an amino acid to the nucleotide precursor UDP-N-acetylmuramoyl-L-alanyl-D-glutamate (UMAG) in the biosynthesis of bacterial cell-wall peptidoglycan. This chain is UDP-N-acetylmuramyl-tripeptide synthetase, found in Leifsonia xyli subsp. xyli (strain CTCB07).